The primary structure comprises 936 residues: Lon protease homolog, mitochondrial (936 aa).

A mitochondrion-targeting transit peptide spans Met1–Ala40. Positions Ala65 to Ser95 are disordered. A compositionally biased stretch (low complexity) spans Phe66–Ser95. One can recognise a Lon N-terminal domain in the interval Val112–Val352. ATP is bound at residue Gly507–Thr514. The region spanning Val748–Trp932 is the Lon proteolytic domain. Catalysis depends on residues Ser838 and Lys881.

The protein belongs to the peptidase S16 family. As to quaternary structure, homohexamer or homoheptamer. Organized in a ring with a central cavity.

The protein resides in the mitochondrion matrix. The enzyme catalyses Hydrolysis of proteins in presence of ATP.. In terms of biological role, ATP-dependent serine protease that mediates the selective degradation of misfolded, unassembled or oxidatively damaged polypeptides as well as certain short-lived regulatory proteins in the mitochondrial matrix. May also have a chaperone function in the assembly of inner membrane protein complexes. Participates in the regulation of mitochondrial gene expression and in the maintenance of the integrity of the mitochondrial genome. Binds to mitochondrial DNA in a site-specific manner. In Ostreococcus lucimarinus (strain CCE9901), this protein is Lon protease homolog, mitochondrial.